Here is a 403-residue protein sequence, read N- to C-terminus: S-adenosylmethionine synthase (403 aa).

Position 15 (His-15) interacts with ATP. Position 17 (Asp-17) interacts with Mg(2+). Glu-43 serves as a coordination point for K(+). Positions 56 and 99 each coordinate L-methionine. Residues 99-109 (QSPDINQGVDR) form a flexible loop region. ATP-binding positions include 166–168 (DAK), 232–233 (KF), Asp-241, 247–248 (RK), Ala-264, and Lys-268. Asp-241 provides a ligand contact to L-methionine. Residue Lys-272 coordinates L-methionine.

The protein belongs to the AdoMet synthase family. As to quaternary structure, homotetramer; dimer of dimers. Mg(2+) is required as a cofactor. The cofactor is K(+).

It localises to the cytoplasm. It carries out the reaction L-methionine + ATP + H2O = S-adenosyl-L-methionine + phosphate + diphosphate. It functions in the pathway amino-acid biosynthesis; S-adenosyl-L-methionine biosynthesis; S-adenosyl-L-methionine from L-methionine: step 1/1. Its function is as follows. Catalyzes the formation of S-adenosylmethionine (AdoMet) from methionine and ATP. The overall synthetic reaction is composed of two sequential steps, AdoMet formation and the subsequent tripolyphosphate hydrolysis which occurs prior to release of AdoMet from the enzyme. This is S-adenosylmethionine synthase from Xylella fastidiosa (strain Temecula1 / ATCC 700964).